A 488-amino-acid chain; its full sequence is V-type proton ATPase subunit B 1 (488 aa).

Belongs to the ATPase alpha/beta chains family. V-ATPase is a heteromultimeric enzyme composed of a peripheral catalytic V1 complex (main components: subunits A, B, C, D, E, and F) attached to an integral membrane V0 proton pore complex (main component: the proteolipid protein).

In terms of biological role, non-catalytic subunit of the peripheral V1 complex of vacuolar ATPase. V-ATPase is responsible for acidifying a variety of intracellular compartments in eukaryotic cells. In Hordeum vulgare (Barley), this protein is V-type proton ATPase subunit B 1.